The chain runs to 397 residues: Ribosomal RNA large subunit methyltransferase I (397 aa).

A PUA domain is found at 2–81 (STTVYLQKDR…EQIDTEFFVR (80 aa)).

The protein belongs to the methyltransferase superfamily. RlmI family.

It is found in the cytoplasm. The enzyme catalyses cytidine(1962) in 23S rRNA + S-adenosyl-L-methionine = 5-methylcytidine(1962) in 23S rRNA + S-adenosyl-L-homocysteine + H(+). Specifically methylates the cytosine at position 1962 (m5C1962) of 23S rRNA. The protein is Ribosomal RNA large subunit methyltransferase I of Tolumonas auensis (strain DSM 9187 / NBRC 110442 / TA 4).